We begin with the raw amino-acid sequence, 505 residues long: Maturase K (505 aa).

Belongs to the intron maturase 2 family. MatK subfamily.

It is found in the plastid. Its subcellular location is the chloroplast. Its function is as follows. Usually encoded in the trnK tRNA gene intron. Probably assists in splicing its own and other chloroplast group II introns. In Spinacia oleracea (Spinach), this protein is Maturase K.